The chain runs to 666 residues: Protein OPG074 (666 aa).

Residues 574-596 (VVIFFNTIIEYIVATIYYRLAVL) traverse the membrane as a helical segment.

Belongs to the orthopoxvirus OPG074 family.

It is found in the membrane. The polypeptide is Protein OPG074 (OPG074) (Homo sapiens (Human)).